The following is a 20-amino-acid chain: Antifungal protein (20 aa).

It belongs to the protease inhibitor I3 (leguminous Kunitz-type inhibitor) family.

Inhibits soybean trypsin. Has antifungal activity against R.cerealis, A.brassicae and A.niger, and weak antifungal activity against F.oxysporum. The protein is Antifungal protein of Cullen corylifolium (Malaysian scurfpea).